The sequence spans 425 residues: Putative chloroquine resistance transporter (425 aa).

Residues 1 to 56 (MTGIKKGKNKKKNMKNDDRYKELDSLITNGSEIGNNSGRSCVKRFFKIIGNEMKNN) are Cytoplasmic-facing. A helical transmembrane segment spans residues 57 to 77 (VYVYLLSILYLCVCVMNKVFA). The Vacuolar portion of the chain corresponds to 78–88 (KRTLNKMGNYS). Residue asparagine 86 is glycosylated (N-linked (GlcNAc...) asparagine). A helical membrane pass occupies residues 89-109 (FVTSETHNIICIIVFQLLYFI). The Cytoplasmic portion of the chain corresponds to 110–126 (YRKTSSSSVYKNESQKN). A helical transmembrane segment spans residues 127–147 (FGWQFFLISLLDASTVIISMI). The Vacuolar portion of the chain corresponds to 148 to 157 (GLTRTTGNIQ). A helical membrane pass occupies residues 158-178 (SFIMQLIIPVNMYFWFMFLGY). Topologically, residues 179–181 (RYH) are cytoplasmic. The helical transmembrane segment at 182–202 (LFNYLGAFIILITIAVVETFL) threads the bilayer. Residues 203–210 (SFETQGEN) are Vacuolar-facing. Residues 211–231 (SIIFNLIMISAFNTLSFSNMT) traverse the membrane as a helical segment. Residues 232-249 (REVVFKKHKINILRLNAM) are Cytoplasmic-facing. The chain crosses the membrane as a helical span at residues 250–270 (VVLFQFFTSLLVLPVYNIPFL). At 271–318 (KEIYMPFSEMSTNINNGLRCLFYGENTIVENCGVGMVKMCDNCEGAWK) the chain is on the vacuolar side. Disulfide bonds link cysteine 290-cysteine 313 and cysteine 302-cysteine 310. The helical transmembrane segment at 319–339 (TFITFSFFNICDNLLACYIID) threads the bilayer. The Cytoplasmic segment spans residues 340-347 (KFSTMTYT). The helical transmembrane segment at 348–368 (IVSCIQGPAITIAYYFKFLAG) threads the bilayer. The Vacuolar portion of the chain corresponds to 369–378 (DAVRKPRILD). A helical transmembrane segment spans residues 379-399 (FLTLFGYLFGTIIYRIGNIIL). Over 400-425 (EKKQVIKSQNSNDSEAELTSIETSRA) the chain is Cytoplasmic.

This sequence belongs to the CRT-like transporter family.

It localises to the vacuole membrane. Its function is as follows. Nutrient transporter. Involved in maintaining the osmotic homeostasis of the digestive vacuole. This Plasmodium berghei protein is Putative chloroquine resistance transporter.